Here is an 817-residue protein sequence, read N- to C-terminus: MVAIENKEVLFGGSLKSTEEYDQFFCPSIDIPKFLFKYWDSKPLGKNVSSDQFAETAIQMLEYFIQNNYTGPYLPIKPEIWLPQRLRDEATLKDAIIKSLTVEGERPYRLAPKLLFLLLSQTLFNYANSKDPLHIWYKARLDFLHQQMLKEHVSELFNQIMEGMHIVSSHVSSLDRDLQGRFTMEMGLIQSYYGRDTLALQLMKESAKVMDFHFELTGALGRRTKFQTFDTSQLVVLAKSRDRCKDTEQNKSTSTQPITFELNDDTLLEKISFKEDQKSLAPSEELDPILSSEDPNHPSKLDPLDASLLLAFCHIIKNNNPDDGLTREEMAPYAERVLVYPVNWSVYTMALLVRARLEGFKSRTVERSVLQMQALLDQLNDQLSFGKSPEGVDKPENDEGLGSFLPKPQDGENSASLKERLNYFYNLLMPSRWQLEAELAERFISVGATKSALEIFERLQMWDCVVMCHCSLNRQDLAVQVIKRELENDPYDFLLRTLLGDIENNPKHYVEAWELSCKRFAPAQRSLGKYYYKKGDLLQAMNCFNESLKINPLSYPTWFTYGCAALELQKYDAAMEAFSRCLSINPEDGESWNNLASAMLKAKDHTKEQAWHAMQQGIKYMYDNWRIWENYMLISVDVNKWSEVIRALRRIIEIKGKDEGERAVDVQCLDLVVNYVMQSCDNDASGLARMLNELLKMVVPLITNDVRLWRIVARYYLWRRHFAESLNATLKAYRILISSPNVTSDEATWNKTVEGALELVEAYANLGEMPGRMGGVVAKDWKFKSRSVLRSLIGKGKNIWENTESYQKLESELENLK.

2 disordered regions span residues 276 to 298 (DQKS…PNHP) and 386 to 413 (GKSP…DGEN). TPR repeat units follow at residues 459–492 (LQMW…DPYD), 521–554 (APAQ…NPLS), 555–588 (YPTW…NPED), and 625–658 (WRIW…KGKD).

The protein is TPR repeat-containing protein C19B12.01 of Schizosaccharomyces pombe (strain 972 / ATCC 24843) (Fission yeast).